A 135-amino-acid polypeptide reads, in one-letter code: Small ribosomal subunit protein uS11 (135 aa).

Positions 1–10 (MPPKSRTATA) are enriched in polar residues. Disordered stretches follow at residues 1–27 (MPPKSRTATASRKPRRKEKKNVAHGHA) and 114–135 (GAIQDVTPSPHNGCRPPKRRRV). Residues 12–27 (RKPRRKEKKNVAHGHA) show a composition bias toward basic residues.

This sequence belongs to the universal ribosomal protein uS11 family. In terms of assembly, part of the 30S ribosomal subunit. Interacts with proteins S7 and S18. Binds to IF-3.

Functionally, located on the platform of the 30S subunit, it bridges several disparate RNA helices of the 16S rRNA. Forms part of the Shine-Dalgarno cleft in the 70S ribosome. The chain is Small ribosomal subunit protein uS11 from Kineococcus radiotolerans (strain ATCC BAA-149 / DSM 14245 / SRS30216).